The primary structure comprises 211 residues: PITH domain-containing protein GA19395 (211 aa).

In terms of domain architecture, PITH spans 20 to 192; the sequence is DHALEMGIEY…GVTICNYEAR (173 aa).

This sequence belongs to the PITHD1 family.

This chain is PITH domain-containing protein GA19395, found in Drosophila pseudoobscura pseudoobscura (Fruit fly).